Here is a 765-residue protein sequence, read N- to C-terminus: Endothelin-converting enzyme 2 (765 aa).

Over 1–60 the chain is Cytoplasmic; that stretch reads MSVALQELGGGGNMVEYKRATLRDEDAPETPVEGGASPDAVEAGFRKRTSRLLGLHTQLE. Residues 61–81 form a helical; Signal-anchor for type II membrane protein membrane-spanning segment; that stretch reads LVLAGVSLLLAALLLGCLVAL. The Lumenal segment spans residues 82–765; the sequence is GVQYHRDPSH…MNSGQLCEVW (684 aa). The region spanning 93 to 765 is the Peptidase M13 domain; sequence TCLTEACIRV…MNSGQLCEVW (673 aa). 5 cysteine pairs are disulfide-bonded: Cys94-Cys99, Cys117-Cys750, Cys125-Cys710, Cys181-Cys430, and Cys639-Cys762. N-linked (GlcNAc...) asparagine glycosylation is found at Asn161, Asn165, Asn206, Asn266, Asn311, Asn378, and Asn534. His602 is a Zn(2+) binding site. Residue Glu603 is part of the active site. Residue His606 coordinates Zn(2+). N-linked (GlcNAc...) asparagine glycosylation is found at Asn627 and Asn635. Zn(2+) is bound at residue Glu662. The Proton donor role is filled by Asp666.

It belongs to the peptidase M13 family. It depends on Zn(2+) as a cofactor. Isoform ECE2-1 and isoform ECE2-2 are expressed in brain and adrenal gland.

It is found in the golgi apparatus membrane. It localises to the cytoplasmic vesicle. Its subcellular location is the secretory vesicle membrane. It catalyses the reaction Hydrolysis of the 21-Trp-|-Val-22 bond in big endothelin to form endothelin 1.. Converts big endothelin-1 to endothelin-1. Also involved in the processing of various neuroendocrine peptides, including neurotensin, angiotensin I, substance P, proenkephalin-derived peptides, and prodynorphin-derived peptides. May play a role in amyloid-beta processing. The chain is Endothelin-converting enzyme 2 from Bos taurus (Bovine).